The sequence spans 71 residues: Small ribosomal subunit protein bS21 (71 aa).

It belongs to the bacterial ribosomal protein bS21 family.

This is Small ribosomal subunit protein bS21 from Hahella chejuensis (strain KCTC 2396).